The sequence spans 490 residues: 3-octaprenyl-4-hydroxybenzoate carboxy-lyase (490 aa).

Asn-172 is a binding site for Mn(2+). Prenylated FMN contacts are provided by residues 175-177, 189-191, and 194-195; these read IYR, RWL, and RG. Glu-238 contacts Mn(2+). The Proton donor role is filled by Asp-287.

This sequence belongs to the UbiD family. Homohexamer. The cofactor is prenylated FMN. Requires Mn(2+) as cofactor.

It localises to the cell membrane. The enzyme catalyses a 4-hydroxy-3-(all-trans-polyprenyl)benzoate + H(+) = a 2-(all-trans-polyprenyl)phenol + CO2. It functions in the pathway cofactor biosynthesis; ubiquinone biosynthesis. Catalyzes the decarboxylation of 3-octaprenyl-4-hydroxy benzoate to 2-octaprenylphenol, an intermediate step in ubiquinone biosynthesis. This is 3-octaprenyl-4-hydroxybenzoate carboxy-lyase from Idiomarina loihiensis (strain ATCC BAA-735 / DSM 15497 / L2-TR).